The chain runs to 130 residues: Histone H2B.2 (130 aa).

Over residues M1–P19 the composition is skewed to basic and acidic residues. The tract at residues M1–K38 is disordered. Residues K7 and K8 each carry the N6-acetyllysine; alternate modification. Residues K7 and K8 each participate in a glycyl lysine isopeptide (Lys-Gly) (interchain with G-Cter in SUMO); alternate cross-link. Position 11 is a phosphoserine (S11). N6-acetyllysine is present on K12. N6-acetyllysine; alternate is present on K17. K17 participates in a covalent cross-link: Glycyl lysine isopeptide (Lys-Gly) (interchain with G-Cter in SUMO); alternate. K18 is covalently cross-linked (Glycyl lysine isopeptide (Lys-Gly) (interchain with G-Cter in SUMO)). A Glycyl lysine isopeptide (Lys-Gly) (interchain with G-Cter in ubiquitin) cross-link involves residue K124.

Belongs to the histone H2B family. In terms of assembly, the nucleosome is a histone octamer containing two molecules each of H2A, H2B, H3 and H4 assembled in one H3-H4 heterotetramer and two H2A-H2B heterodimers. The octamer wraps approximately 147 bp of DNA. Monoubiquitinated by the UBC2-BRE1 complex to form H2BK123ub1. H2BK123ub1 gives a specific tag for epigenetic transcriptional activation and is also prerequisite for H3K4me and H3K79me formation. H2BK123ub1 also modulates the formation of double-strand breaks during meiosis and is a prerequisite for DNA-damage checkpoint activation. Post-translationally, phosphorylated by STE20 to form H2BS10ph during progression through meiotic prophase. May be correlated with chromosome condensation. In terms of processing, acetylated by GCN5 to form H2BK11ac and H2BK16ac. H2BK16ac can also be formed by ESA1. Acetylation of N-terminal lysines and particularly formation of H2BK11acK16ac has a positive effect on transcription. Sumoylation to form H2BK6su or H2BK7su, and probably also H2BK16su or H2BK17su, occurs preferentially near the telomeres and represses gene transcription.

It is found in the nucleus. Its subcellular location is the chromosome. Core component of nucleosome. Nucleosomes wrap and compact DNA into chromatin, limiting DNA accessibility to the cellular machineries which require DNA as a template. Histones thereby play a central role in transcription regulation, DNA repair, DNA replication and chromosomal stability. DNA accessibility is regulated via a complex set of post-translational modifications of histones, also called histone code, and nucleosome remodeling. The sequence is that of Histone H2B.2 (HTB2) from Candida albicans (strain SC5314 / ATCC MYA-2876) (Yeast).